Here is a 561-residue protein sequence, read N- to C-terminus: Putative transport protein YbjL (561 aa).

A run of 5 helical transmembrane segments spans residues 8–28 (LLNGNYILLLFVVLALGLCLG), 32–52 (LGSIQLGNSIGVLVVSLLLGQ), 66–86 (FMLFIFCVGVEAGPNFFSIFF), 94–114 (MLALVMVGSALVIALGLGKLF), and 158–178 (NLSLGYALTYLIGLVSLIVGA). RCK C-terminal domains follow at residues 200-288 (RGLD…SFRN) and 292-373 (VFDR…RIGF). Transmembrane regions (helical) follow at residues 383–403 (LLAFCAFFVIGLMIGMITFQF), 406–426 (FSFGMGNAAGLLFAGIMLGFM), 451–471 (VFMAGVGLSAGSGINNGLGAI), 475–495 (MLIAGLIVSLVPVVICFLFGA), and 540–560 (AIANVLLTLAGTIIVMVWPGL).

It belongs to the AAE transporter (TC 2.A.81) family. YbjL subfamily.

It localises to the cell membrane. The chain is Putative transport protein YbjL from Shigella boydii serotype 4 (strain Sb227).